The chain runs to 331 residues: Protein C10 (331 aa).

This sequence belongs to the poxviridae C4/C10 protein family.

This is Protein C10 from Vaccinia virus (strain Copenhagen) (VACV).